Here is a 312-residue protein sequence, read N- to C-terminus: Malate dehydrogenase (312 aa).

Residues G7–G13 and D34 contribute to the NAD(+) site. R81 and R87 together coordinate substrate. NAD(+) contacts are provided by residues N94 and I117–N119. Positions 119 and 153 each coordinate substrate. H177 serves as the catalytic Proton acceptor. Position 227 (M227) interacts with NAD(+).

The protein belongs to the LDH/MDH superfamily. MDH type 1 family. As to quaternary structure, homodimer.

The enzyme catalyses (S)-malate + NAD(+) = oxaloacetate + NADH + H(+). Functionally, catalyzes the reversible oxidation of malate to oxaloacetate. The chain is Malate dehydrogenase from Escherichia coli (strain ATCC 8739 / DSM 1576 / NBRC 3972 / NCIMB 8545 / WDCM 00012 / Crooks).